We begin with the raw amino-acid sequence, 89 residues long: Small ribosomal subunit protein uS15 (89 aa).

Belongs to the universal ribosomal protein uS15 family. As to quaternary structure, part of the 30S ribosomal subunit. Forms a bridge to the 50S subunit in the 70S ribosome, contacting the 23S rRNA.

In terms of biological role, one of the primary rRNA binding proteins, it binds directly to 16S rRNA where it helps nucleate assembly of the platform of the 30S subunit by binding and bridging several RNA helices of the 16S rRNA. Forms an intersubunit bridge (bridge B4) with the 23S rRNA of the 50S subunit in the ribosome. This Bacillus licheniformis (strain ATCC 14580 / DSM 13 / JCM 2505 / CCUG 7422 / NBRC 12200 / NCIMB 9375 / NCTC 10341 / NRRL NRS-1264 / Gibson 46) protein is Small ribosomal subunit protein uS15.